The chain runs to 309 residues: Carbamate kinase (309 aa).

The protein belongs to the carbamate kinase family.

It is found in the cytoplasm. It carries out the reaction hydrogencarbonate + NH4(+) + ATP = carbamoyl phosphate + ADP + H2O + H(+). It functions in the pathway metabolic intermediate metabolism; carbamoyl phosphate degradation; CO(2) and NH(3) from carbamoyl phosphate: step 1/1. The sequence is that of Carbamate kinase (arcC) from Staphylococcus haemolyticus (strain JCSC1435).